We begin with the raw amino-acid sequence, 320 residues long: ATP synthase gamma chain (320 aa).

It belongs to the ATPase gamma chain family. As to quaternary structure, F-type ATPases have 2 components, CF(1) - the catalytic core - and CF(0) - the membrane proton channel. CF(1) has five subunits: alpha(3), beta(3), gamma(1), delta(1), epsilon(1). CF(0) has three main subunits: a, b and c.

It localises to the cell membrane. Produces ATP from ADP in the presence of a proton gradient across the membrane. The gamma chain is believed to be important in regulating ATPase activity and the flow of protons through the CF(0) complex. The polypeptide is ATP synthase gamma chain (Lactobacillus helveticus (strain DPC 4571)).